A 208-amino-acid chain; its full sequence is Molybdenum cofactor guanylyltransferase (208 aa).

Residues 10–12, Lys23, Asp69, and Asp103 each bind GTP; that span reads LAG. Asp103 is a Mg(2+) binding site.

It belongs to the MobA family. Monomer. Mg(2+) is required as a cofactor.

It localises to the cytoplasm. The catalysed reaction is Mo-molybdopterin + GTP + H(+) = Mo-molybdopterin guanine dinucleotide + diphosphate. Transfers a GMP moiety from GTP to Mo-molybdopterin (Mo-MPT) cofactor (Moco or molybdenum cofactor) to form Mo-molybdopterin guanine dinucleotide (Mo-MGD) cofactor. This Mesorhizobium japonicum (strain LMG 29417 / CECT 9101 / MAFF 303099) (Mesorhizobium loti (strain MAFF 303099)) protein is Molybdenum cofactor guanylyltransferase.